Consider the following 215-residue polypeptide: RxLR effector protein PITG_00582 (215 aa).

The first 19 residues, 1–19, serve as a signal peptide directing secretion; it reads MLPYKTLLLALGFFFTVQC. The RxLR-dEER signature appears at 39-51; the sequence is RLLRSPEKTDEER. The stretch at 81–149 forms a coiled coil; that stretch reads VAKQAKEMSN…QNELEKLAKQ (69 aa).

Belongs to the RxLR effector family.

It localises to the secreted. The protein localises to the host cell membrane. Its function is as follows. Effector that might be involved in host plant infection. This chain is RxLR effector protein PITG_00582, found in Phytophthora infestans (strain T30-4) (Potato late blight agent).